Consider the following 81-residue polypeptide: Exodeoxyribonuclease 7 small subunit (81 aa).

Positions 61 to 81 (MNDSDQEVAFETPQGGTGDAD) are disordered.

Belongs to the XseB family. In terms of assembly, heterooligomer composed of large and small subunits.

The protein localises to the cytoplasm. It carries out the reaction Exonucleolytic cleavage in either 5'- to 3'- or 3'- to 5'-direction to yield nucleoside 5'-phosphates.. Its function is as follows. Bidirectionally degrades single-stranded DNA into large acid-insoluble oligonucleotides, which are then degraded further into small acid-soluble oligonucleotides. The chain is Exodeoxyribonuclease 7 small subunit from Levilactobacillus brevis (strain ATCC 367 / BCRC 12310 / CIP 105137 / JCM 1170 / LMG 11437 / NCIMB 947 / NCTC 947) (Lactobacillus brevis).